Reading from the N-terminus, the 167-residue chain is Large ribosomal subunit protein uL10 (167 aa).

It belongs to the universal ribosomal protein uL10 family. In terms of assembly, part of the ribosomal stalk of the 50S ribosomal subunit. The N-terminus interacts with L11 and the large rRNA to form the base of the stalk. The C-terminus forms an elongated spine to which L12 dimers bind in a sequential fashion forming a multimeric L10(L12)X complex.

In terms of biological role, forms part of the ribosomal stalk, playing a central role in the interaction of the ribosome with GTP-bound translation factors. The protein is Large ribosomal subunit protein uL10 of Paraburkholderia phytofirmans (strain DSM 17436 / LMG 22146 / PsJN) (Burkholderia phytofirmans).